The sequence spans 555 residues: Glutamine--tRNA ligase (555 aa).

Positions Pro34–His44 match the 'HIGH' region motif. Residues Glu35–Asn37 and His41–Ser47 each bind ATP. Positions 67 and 212 each coordinate L-glutamine. ATP contacts are provided by residues Thr231, Arg261–Leu262, and Met269–Lys271. Positions Ile268–Arg272 match the 'KMSKS' region motif.

It belongs to the class-I aminoacyl-tRNA synthetase family. As to quaternary structure, monomer.

Its subcellular location is the cytoplasm. It carries out the reaction tRNA(Gln) + L-glutamine + ATP = L-glutaminyl-tRNA(Gln) + AMP + diphosphate. The chain is Glutamine--tRNA ligase from Yersinia pseudotuberculosis serotype O:1b (strain IP 31758).